A 261-amino-acid chain; its full sequence is Putative [LysW]-aminoadipate/[LysW]-glutamate kinase (261 aa).

Residues 35–36 (GG), Arg62, and Asn162 each bind substrate.

Belongs to the acetylglutamate kinase family. LysZ subfamily.

It is found in the cytoplasm. The catalysed reaction is [amino-group carrier protein]-C-terminal-N-(1,4-dicarboxybutan-1-yl)-L-glutamine + ATP = [amino-group carrier protein]-C-terminal-N-(1-carboxy-5-phosphooxy-5-oxopentan-1-yl)-L-glutamine + ADP. It catalyses the reaction [amino-group carrier protein]-C-terminal-gamma-(L-glutamyl)-L-glutamate + ATP = [amino-group carrier protein]-C-terminal-gamma-(5-phospho-L-glutamyl)-L-glutamate + ADP. It participates in amino-acid biosynthesis; L-lysine biosynthesis via AAA pathway; L-lysine from L-alpha-aminoadipate (Thermus route): step 2/5. It functions in the pathway amino-acid biosynthesis; L-arginine biosynthesis. Its function is as follows. Involved in both the arginine and lysine biosynthetic pathways. Phosphorylates the LysW-bound precursors glutamate (for arginine biosynthesis), respectively alpha-aminoadipate (for lysine biosynthesis). This Pyrobaculum islandicum (strain DSM 4184 / JCM 9189 / GEO3) protein is Putative [LysW]-aminoadipate/[LysW]-glutamate kinase.